A 459-amino-acid chain; its full sequence is Phosphoglucosamine mutase (459 aa).

The active-site Phosphoserine intermediate is serine 102. Mg(2+)-binding residues include serine 102, aspartate 243, aspartate 245, and aspartate 247. Position 102 is a phosphoserine (serine 102).

Belongs to the phosphohexose mutase family. It depends on Mg(2+) as a cofactor. Post-translationally, activated by phosphorylation.

The enzyme catalyses alpha-D-glucosamine 1-phosphate = D-glucosamine 6-phosphate. Functionally, catalyzes the conversion of glucosamine-6-phosphate to glucosamine-1-phosphate. The polypeptide is Phosphoglucosamine mutase (Bartonella quintana (strain Toulouse) (Rochalimaea quintana)).